Consider the following 345-residue polypeptide: Protein-glutamate methylesterase/protein-glutamine glutaminase 2 (345 aa).

A Response regulatory domain is found at 7 to 124; sequence KVLVVDDSPV…TADMLGYRSL (118 aa). A 4-aspartylphosphate modification is found at aspartate 58. Residues 154 to 345 enclose the CheB-type methylesterase domain; sequence STSQYQLIAI…LPQFLCDLLS (192 aa). Catalysis depends on residues serine 166, histidine 192, and aspartate 289.

This sequence belongs to the CheB family. Post-translationally, phosphorylated by CheA. Phosphorylation of the N-terminal regulatory domain activates the methylesterase activity.

It is found in the cytoplasm. The enzyme catalyses [protein]-L-glutamate 5-O-methyl ester + H2O = L-glutamyl-[protein] + methanol + H(+). It catalyses the reaction L-glutaminyl-[protein] + H2O = L-glutamyl-[protein] + NH4(+). In terms of biological role, involved in chemotaxis. Part of a chemotaxis signal transduction system that modulates chemotaxis in response to various stimuli. Catalyzes the demethylation of specific methylglutamate residues introduced into the chemoreceptors (methyl-accepting chemotaxis proteins or MCP) by CheR. Also mediates the irreversible deamidation of specific glutamine residues to glutamic acid. The sequence is that of Protein-glutamate methylesterase/protein-glutamine glutaminase 2 from Vibrio vulnificus (strain YJ016).